Consider the following 362-residue polypeptide: Chorismate synthase (362 aa).

Arg48 contacts NADP(+). Residues 131-133 (RAS), 243-244 (NA), Gly288, 303-307 (KPTSS), and Arg329 each bind FMN.

Belongs to the chorismate synthase family. As to quaternary structure, homotetramer. FMNH2 is required as a cofactor.

The catalysed reaction is 5-O-(1-carboxyvinyl)-3-phosphoshikimate = chorismate + phosphate. The protein operates within metabolic intermediate biosynthesis; chorismate biosynthesis; chorismate from D-erythrose 4-phosphate and phosphoenolpyruvate: step 7/7. Its function is as follows. Catalyzes the anti-1,4-elimination of the C-3 phosphate and the C-6 proR hydrogen from 5-enolpyruvylshikimate-3-phosphate (EPSP) to yield chorismate, which is the branch point compound that serves as the starting substrate for the three terminal pathways of aromatic amino acid biosynthesis. This reaction introduces a second double bond into the aromatic ring system. This Bartonella tribocorum (strain CIP 105476 / IBS 506) protein is Chorismate synthase.